Reading from the N-terminus, the 118-residue chain is MIVGHGIDLQEISAIEKVYQRNPRFAQKILTEQELAIFESFPYKRRLNYLAGRWSGKEAFAKAIGTGIGRLTFQDIEILNDVRGCPILTKSPFKGNSFISISHSGNYVQASVILEDKK.

Mg(2+)-binding residues include D8 and E58.

It belongs to the P-Pant transferase superfamily. AcpS family. Mg(2+) serves as cofactor.

It localises to the cytoplasm. It catalyses the reaction apo-[ACP] + CoA = holo-[ACP] + adenosine 3',5'-bisphosphate + H(+). Transfers the 4'-phosphopantetheine moiety from coenzyme A to a Ser of acyl-carrier-protein. This chain is Holo-[acyl-carrier-protein] synthase, found in Streptococcus pyogenes serotype M1.